Reading from the N-terminus, the 99-residue chain is MTQLPAVEKQEEHLRLRIFLQPKASKDQIVGLHDNELKITITAPPIDGQANAHLLKFLSKTFKVPKSSIVLEKGELNRHKQILIPNPKVIPTEVNVLLK.

This sequence belongs to the UPF0235 family.

The chain is UPF0235 protein PM1313 from Pasteurella multocida (strain Pm70).